A 301-amino-acid polypeptide reads, in one-letter code: MTTTTADHNISAQQKAVEENLVNRVLQSFDACENPRLKQLMESLVVHLHDFIRDVRLTEDEWNYAIDFLTAVGHITDDKRQEFVLLSDTLGASMQTIAVNNEAYENSTEATVFGPFFLDDAPEVELGGDIAGGAQGQAAWIEGTVTDTEGNPVPNARIEVWECDEDGLYDVQYADERMAGRAYMHTDANGDYRFWGLTPVPYPIPHDGPVGNMLKAVGRSPVRCAHLHFMVTAPELRTLVTHIFVEGDPQLEIGDSVFGVKDSLIKKFEEQAPGTPTPDGRDLGDQTWARTRFDIVLAPGA.

Fe cation-binding residues include Tyr-169, Tyr-202, His-226, and His-228.

Belongs to the intradiol ring-cleavage dioxygenase family. Fe(3+) serves as cofactor.

It carries out the reaction benzene-1,2,4-triol + O2 = maleylacetate + 2 H(+). It participates in aromatic compound metabolism. In terms of biological role, involved in resorcinol degradation. Catalyzes the conversion of hydroxyquinol to malelylacetate. Also shows weak activity with catechol, 3-methylcatechol and 4-methylcatechol, but cannot use 4-chlorocatechol, 4-nitrocatechol or protocatechuate. This chain is Hydroxyquinol 1,2-dioxygenase, found in Corynebacterium glutamicum (strain ATCC 13032 / DSM 20300 / JCM 1318 / BCRC 11384 / CCUG 27702 / LMG 3730 / NBRC 12168 / NCIMB 10025 / NRRL B-2784 / 534).